The chain runs to 204 residues: Recombination protein RecR (204 aa).

The segment at 61–76 adopts a C4-type zinc-finger fold; sequence CARCNTFSETQICSTC. A Toprim domain is found at 84 to 183; that stretch reads SLLCIVETPA…KVTRIARGIP (100 aa).

The protein belongs to the RecR family.

May play a role in DNA repair. It seems to be involved in an RecBC-independent recombinational process of DNA repair. It may act with RecF and RecO. The polypeptide is Recombination protein RecR (Polynucleobacter asymbioticus (strain DSM 18221 / CIP 109841 / QLW-P1DMWA-1) (Polynucleobacter necessarius subsp. asymbioticus)).